The primary structure comprises 624 residues: Outer dynein arm-docking complex subunit 4 (624 aa).

TPR repeat units lie at residues 11 to 44, 46 to 78, 79 to 112, 273 to 309, 318 to 351, 358 to 391, 395 to 428, and 435 to 468; these read FPSY…QSGD, NCLV…DPTF, CKGI…RPDR, LKSL…NQEE, GNLY…AKEH, SRAL…AKTT, TWLF…AEEE, and LNAS…AKLV. The segment at 511–624 is disordered; sequence MSQMDLQGAS…VQKLEKTKEE (114 aa). 3 stretches are compositionally biased toward basic and acidic residues: residues 520 to 557, 576 to 588, and 595 to 624; these read SEKE…DRKS, IRRE…RRLS, and PSED…TKEE.

In terms of assembly, component of the outer dynein arm-docking complex along with ODAD1, ODAD2, and ODAD3. Interacts with ODAD1; this interaction may facilitate the recruitment and/or attachment of outer dynein arm docking complex proteins, including ODAD1, ODAD3 and ODAD2, to ciliary axonemes. Interacts with components of the IFT complex A, including IFT140, TTC21B/IFT139 and WDR19/IFT144, and the IFT complex B, including IFT46, IFT52 and IFT57. Interacts with CFAP53.

Its subcellular location is the cell projection. The protein resides in the cilium. The protein localises to the cytoplasm. It localises to the cytoskeleton. It is found in the cilium axoneme. Functionally, component of the outer dynein arm-docking complex (ODA-DC) that mediates outer dynein arms (ODA) binding onto the doublet microtubule. Plays an essential role for the assembly of ODA-DC and for the docking of ODA in ciliary axoneme. This chain is Outer dynein arm-docking complex subunit 4 (Odad4), found in Mus musculus (Mouse).